The following is a 521-amino-acid chain: Sphingolipid C9-methyltransferase 2 (521 aa).

2 helical membrane passes run 60–80 and 85–105; these read VLIS…GGGF and FFAI…ISAI. Residues 225 to 226, 262 to 270, 288 to 293, and 318 to 319 contribute to the S-adenosyl-L-methionine site; these read YT, MLDIGCGWG, TLGRNQ, and YR.

The protein belongs to the CFA/CMAS family.

It localises to the membrane. It catalyses the reaction a (4E,8E)-4-sphinga-4,8-dienine ceramide + S-adenosyl-L-methionine = a 9-methyl-(4E,8E)-sphinga-4,8-dienine ceramide + S-adenosyl-L-homocysteine + H(+). It functions in the pathway lipid metabolism; sphingolipid metabolism. Catalyzes methylation of the sphingoid base component of glucosylceramides (GluCers) at the C9-position. Sphingolipid C9-methylation requires 4,8-desaturated ceramides as substrates. Glucosylceramides play important roles in growth, differentiation and pathogenicity. The methyl group at the C9-position distinguishes fungal glucosylceramides from those of plants and animals and may thus play a role in host-pathogen interactions enabling the host to recognize the fungal attack and initiate specific defense responses. However, C-9 methylation of GlcCers is not essential for the sensitivity of F.graminearum to plant defensins MsDef1 and RsAFP2. This Gibberella zeae (strain ATCC MYA-4620 / CBS 123657 / FGSC 9075 / NRRL 31084 / PH-1) (Wheat head blight fungus) protein is Sphingolipid C9-methyltransferase 2.